A 221-amino-acid chain; its full sequence is Probable nicotinate-nucleotide adenylyltransferase (221 aa).

The protein belongs to the NadD family.

The enzyme catalyses nicotinate beta-D-ribonucleotide + ATP + H(+) = deamido-NAD(+) + diphosphate. It participates in cofactor biosynthesis; NAD(+) biosynthesis; deamido-NAD(+) from nicotinate D-ribonucleotide: step 1/1. Functionally, catalyzes the reversible adenylation of nicotinate mononucleotide (NaMN) to nicotinic acid adenine dinucleotide (NaAD). This Marinomonas sp. (strain MWYL1) protein is Probable nicotinate-nucleotide adenylyltransferase.